The following is a 197-amino-acid chain: Small ribosomal subunit protein uS4y (197 aa).

One can recognise an S4 RNA-binding domain in the interval 109-183 (RRLQTIVFKS…VKRRNERAGA (75 aa)). Residues 161–197 (SLTSPFGGGRPGRVKRRNERAGAKKASGGDGDEDDEE) form a disordered region.

Belongs to the universal ribosomal protein uS4 family. In terms of assembly, binds to the translation initiation factors TIF3E1.

In Arabidopsis thaliana (Mouse-ear cress), this protein is Small ribosomal subunit protein uS4y (RPS9C).